The chain runs to 109 residues: Large ribosomal subunit protein uL22 (109 aa).

This sequence belongs to the universal ribosomal protein uL22 family. In terms of assembly, part of the 50S ribosomal subunit.

Its function is as follows. This protein binds specifically to 23S rRNA; its binding is stimulated by other ribosomal proteins, e.g. L4, L17, and L20. It is important during the early stages of 50S assembly. It makes multiple contacts with different domains of the 23S rRNA in the assembled 50S subunit and ribosome. In terms of biological role, the globular domain of the protein is located near the polypeptide exit tunnel on the outside of the subunit, while an extended beta-hairpin is found that lines the wall of the exit tunnel in the center of the 70S ribosome. This is Large ribosomal subunit protein uL22 from Neisseria gonorrhoeae (strain ATCC 700825 / FA 1090).